We begin with the raw amino-acid sequence, 314 residues long: DegV domain-containing protein XCC3382 (314 aa).

The 305-residue stretch at 3–307 folds into the DegV domain; the sequence is IGIVVDSACD…KGALAVAFAA (305 aa). The hexadecanoate site is built by Thr-63 and Ser-96.

Functionally, may bind long-chain fatty acids, such as palmitate, and may play a role in lipid transport or fatty acid metabolism. This is DegV domain-containing protein XCC3382 from Xanthomonas campestris pv. campestris (strain ATCC 33913 / DSM 3586 / NCPPB 528 / LMG 568 / P 25).